A 294-amino-acid polypeptide reads, in one-letter code: Putative inactive magnesium transporter MRS2-8 (294 aa).

A coiled-coil region spans residues 179–216 (KLKSSMTRLTAQVQKIKDELEQLLEDDEDMAELYLSRK).

The protein belongs to the CorA metal ion transporter (MIT) (TC 1.A.35.5) family.

The sequence is that of Putative inactive magnesium transporter MRS2-8 (MRS2-8) from Arabidopsis thaliana (Mouse-ear cress).